Consider the following 512-residue polypeptide: Apolipoprotein N-acyltransferase (512 aa).

Helical transmembrane passes span 5 to 25 (LDKY…FAAA), 56 to 76 (FAVS…FYWI), 92 to 112 (VPLT…CFWL), 118 to 138 (LPRG…TEFA), 168 to 188 (LGGI…LVLA), and 195 to 215 (SGKR…GYTA). The CN hydrolase domain occupies 233–477 (LQGNIDQTLK…ETVLEGHIKG (245 aa)). Glu-271 acts as the Proton acceptor in catalysis. Residue Lys-337 is part of the active site. The active-site Nucleophile is Cys-389. Residues 487 to 507 (TGSSWWLMGILALAALILFIF) traverse the membrane as a helical segment.

Belongs to the CN hydrolase family. Apolipoprotein N-acyltransferase subfamily.

Its subcellular location is the cell inner membrane. It catalyses the reaction N-terminal S-1,2-diacyl-sn-glyceryl-L-cysteinyl-[lipoprotein] + a glycerophospholipid = N-acyl-S-1,2-diacyl-sn-glyceryl-L-cysteinyl-[lipoprotein] + a 2-acyl-sn-glycero-3-phospholipid + H(+). It participates in protein modification; lipoprotein biosynthesis (N-acyl transfer). Catalyzes the phospholipid dependent N-acylation of the N-terminal cysteine of apolipoprotein, the last step in lipoprotein maturation. The polypeptide is Apolipoprotein N-acyltransferase (Neisseria meningitidis serogroup B (strain ATCC BAA-335 / MC58)).